The primary structure comprises 356 residues: Tyrosine recombinase XerS (356 aa).

Residues 16–121 (LMPWYVLEYY…ALSSLYKYLT (106 aa)) form the Core-binding (CB) domain. The Tyr recombinase domain maps to 169–354 (GFLTYIDQEH…VSDEQKNALD (186 aa)). Residues Arg-210, Lys-234, His-306, Arg-309, and His-332 contribute to the active site. Catalysis depends on Tyr-341, which acts as the O-(3'-phospho-DNA)-tyrosine intermediate.

It belongs to the 'phage' integrase family. XerS subfamily.

The protein localises to the cytoplasm. With respect to regulation, ftsK is required for recombination. Its function is as follows. Site-specific tyrosine recombinase, which acts by catalyzing the cutting and rejoining of the recombining DNA molecules. Essential to convert dimers of the bacterial chromosome into monomers to permit their segregation at cell division. The sequence is that of Tyrosine recombinase XerS from Streptococcus pneumoniae serotype 4 (strain ATCC BAA-334 / TIGR4).